A 323-amino-acid polypeptide reads, in one-letter code: D-alanine--D-alanine ligase (323 aa).

Positions 121-317 constitute an ATP-grasp domain; sequence RIWFLTNNIN…FTNLIEEIIK (197 aa). ATP is bound at residue 147-199; sequence PMKRPYVIKPLAQGSSIGVEVIFAEDDFNFADYDFPYGDQVIIEQYIKGQGRE. Residues E270, E284, and N286 each coordinate Mg(2+).

The protein belongs to the D-alanine--D-alanine ligase family. Mg(2+) serves as cofactor. It depends on Mn(2+) as a cofactor.

It is found in the cytoplasm. It catalyses the reaction 2 D-alanine + ATP = D-alanyl-D-alanine + ADP + phosphate + H(+). Its pathway is cell wall biogenesis; peptidoglycan biosynthesis. Cell wall formation. The polypeptide is D-alanine--D-alanine ligase (Rickettsia peacockii (strain Rustic)).